A 303-amino-acid chain; its full sequence is E3 ubiquitin-protein ligase SINA-like 3 (303 aa).

The tract at residues 1 to 30 (MENITNNSERSLDRPKRQRPVSMENVGGTA) is disordered. Residues 49-85 (CPICYHKLGAPIYQCDNGHIACSSCCKKVKYKCPYCS) form an RING-type zinc finger. The segment at 99 to 286 (IVEAVVVSCP…MSIPYYLLDE (188 aa)) is SBD. An SIAH-type zinc finger spans residues 102-162 (AVVVSCPNAK…LYRHYHAEHK (61 aa)). Zn(2+)-binding residues include C107, C114, H128, C132, C139, C144, H156, and H161.

The protein belongs to the SINA (Seven in absentia) family.

The enzyme catalyses S-ubiquitinyl-[E2 ubiquitin-conjugating enzyme]-L-cysteine + [acceptor protein]-L-lysine = [E2 ubiquitin-conjugating enzyme]-L-cysteine + N(6)-ubiquitinyl-[acceptor protein]-L-lysine.. The protein operates within protein modification; protein ubiquitination. In terms of biological role, E3 ubiquitin-protein ligase that mediates ubiquitination and subsequent proteasomal degradation of target proteins. E3 ubiquitin ligases accept ubiquitin from an E2 ubiquitin-conjugating enzyme in the form of a thioester and then directly transfers the ubiquitin to targeted substrates. It probably triggers the ubiquitin-mediated degradation of different substrates. This is E3 ubiquitin-protein ligase SINA-like 3 from Arabidopsis thaliana (Mouse-ear cress).